The primary structure comprises 548 residues: 5-epi-aristolochene synthase 3 (548 aa).

Asp-301, Asp-305, Asp-444, Thr-448, and Glu-452 together coordinate Mg(2+). The DDXXD motif signature appears at 301–305 (DDTFD).

The protein belongs to the terpene synthase family. Monomer. Requires Mg(2+) as cofactor. Expressed in roots, but not in shoots.

Its subcellular location is the cytoplasm. It carries out the reaction (2E,6E)-farnesyl diphosphate = (+)-5-epi-aristolochene + diphosphate. It functions in the pathway secondary metabolite biosynthesis; terpenoid biosynthesis. Its function is as follows. Catalyzes the cyclization of trans,trans-farnesyl diphosphate (FPP) to the bicyclic intermediate 5-epi-aristolochene, initial step in the conversion of FPP to the sesquiterpenoid antifungal phytoalexin capsidiol. Produces germacrene A as an enzyme-bound intermediate that is not released by the enzyme, but is further cyclized to produce the bicyclic 5-epi-aristolochene. The protein is 5-epi-aristolochene synthase 3 of Nicotiana attenuata (Coyote tobacco).